A 90-amino-acid polypeptide reads, in one-letter code: MANSKQAKKRIIQAERNRQHNVARRSMMRTFLKKTAYAIEKGDVEAAKENFTKVVPILDKYASKGLIHKNKAARHKSRLSAKIKALATAA.

The protein belongs to the bacterial ribosomal protein bS20 family.

Its function is as follows. Binds directly to 16S ribosomal RNA. The protein is Small ribosomal subunit protein bS20 of Francisella tularensis subsp. holarctica (strain FTNF002-00 / FTA).